The chain runs to 230 residues: TorCAD operon transcriptional regulatory protein TorR (230 aa).

A Response regulatory domain is found at 4–117 (HIVIVEDEPV…ELVVRVKNLL (114 aa)). Asp53 is subject to 4-aspartylphosphate. Positions 132–227 (DNCYRFAGYC…QHGEGYFLAA (96 aa)) form a DNA-binding region, ompR/PhoB-type.

Interacts with TorI. TorI binds to the effector domain of TorR. This interaction, which does not interfere with TorR DNA binding activity, probably prevents the recruitment of RNA polymerase to the torCAD promoter. Phosphorylated and dephosphorylated by TorS.

It localises to the cytoplasm. Member of the two-component regulatory system TorS/TorR involved in the anaerobic utilization of trimethylamine-N-oxide (TMAO). Phosphorylated TorR activates the transcription of the torCAD operon by binding to four decameric boxes located in the torCAD promoter. Box1, 2 and 4 contain the DNA sequence 5'-CTGTTCATAT-3' and box3 contains the DNA sequence 5'-CCGTTCATCC-3'. Phosphorylated as well as unphosphorylated TorR negatively regulates its own expression by binding to box1 and 2. The sequence is that of TorCAD operon transcriptional regulatory protein TorR (torR) from Escherichia coli (strain K12).